The primary structure comprises 166 residues: Interferon gamma (166 aa).

The N-terminal stretch at methionine 1–cysteine 23 is a signal peptide. A Pyrrolidone carboxylic acid modification is found at glutamine 24. N-linked (GlcNAc...) asparagine glycosylation is found at asparagine 39 and asparagine 106. The tract at residues alanine 147–glutamine 166 is disordered. The span at asparagine 148–glutamine 166 shows a compositional bias: basic residues.

The protein belongs to the type II (or gamma) interferon family. Homodimer. Interacts with IFNGR1 (via extracellular domain); this interaction promotes IFNGR1 dimerization. As to expression, released primarily from activated T lymphocytes.

The protein resides in the secreted. In terms of biological role, type II interferon produced by immune cells such as T-cells and NK cells that plays crucial roles in antimicrobial, antiviral, and antitumor responses by activating effector immune cells and enhancing antigen presentation. Primarily signals through the JAK-STAT pathway after interaction with its receptor IFNGR1 to affect gene regulation. Upon IFNG binding, IFNGR1 intracellular domain opens out to allow association of downstream signaling components JAK2, JAK1 and STAT1, leading to STAT1 activation, nuclear translocation and transcription of IFNG-regulated genes. Many of the induced genes are transcription factors such as IRF1 that are able to further drive regulation of a next wave of transcription. Plays a role in class I antigen presentation pathway by inducing a replacement of catalytic proteasome subunits with immunoproteasome subunits. In turn, increases the quantity, quality, and repertoire of peptides for class I MHC loading. Increases the efficiency of peptide generation also by inducing the expression of activator PA28 that associates with the proteasome and alters its proteolytic cleavage preference. Up-regulates as well MHC II complexes on the cell surface by promoting expression of several key molecules such as cathepsins B/CTSB, H/CTSH, and L/CTSL. Participates in the regulation of hematopoietic stem cells during development and under homeostatic conditions by affecting their development, quiescence, and differentiation. This Equus caballus (Horse) protein is Interferon gamma (IFNG).